The chain runs to 512 residues: N-acetyltryptophan 6-hydroxylase ivoC (512 aa).

Residues 6-26 (LVFSFPAWALLLVLTLLYTLY) traverse the membrane as a helical segment. An N-linked (GlcNAc...) asparagine glycan is attached at asparagine 118. A heme-binding site is contributed by cysteine 453.

The protein belongs to the cytochrome P450 family. It depends on heme as a cofactor.

The protein localises to the membrane. Its pathway is pigment biosynthesis. Functionally, N-acetyltryptophan 6-hydroxylase; part of the pathway that mediates the biosynthesis of the gray-brown conidiophore pigment. The first step of the pathway is performed by the nonribosomal peptide synthetase ivoA that catalyzes ATP-dependent unidirectional stereoinversion of L-tryptophan to D-tryptophan with complete conversion. While the stereoinversion is catalyzed by the epimerization (E) domain of ivoA, the terminal condensation (C) domain stereoselectively hydrolyzes D-tryptophanyl-S-phosphopantetheine thioester and thus represents a non-canonical C domain function. D-tryptophan is acetylated, probably by an endogenous acetyltransferase. N-acetyltryptophan is further 6-hydroxylated into N-acetyl-6-hydroxytryptophan (AHT) by the cytochrome P450 monooxygenase ivoC. N-acetyl-6-hydroxytryptophan is substrate of the N-acetyl-6-hydroxytryptophan oxidase ivoB to produce the gray-brown conidiophore pigment. This Emericella nidulans (strain FGSC A4 / ATCC 38163 / CBS 112.46 / NRRL 194 / M139) (Aspergillus nidulans) protein is N-acetyltryptophan 6-hydroxylase ivoC.